The sequence spans 330 residues: Ferredoxin--NADP reductase (330 aa).

Positions 18, 37, 45, 50, 90, 124, 286, and 327 each coordinate FAD.

Belongs to the ferredoxin--NADP reductase type 2 family. In terms of assembly, homodimer. FAD serves as cofactor.

It catalyses the reaction 2 reduced [2Fe-2S]-[ferredoxin] + NADP(+) + H(+) = 2 oxidized [2Fe-2S]-[ferredoxin] + NADPH. The polypeptide is Ferredoxin--NADP reductase (Halalkalibacterium halodurans (strain ATCC BAA-125 / DSM 18197 / FERM 7344 / JCM 9153 / C-125) (Bacillus halodurans)).